Here is a 262-residue protein sequence, read N- to C-terminus: Large ribosomal subunit protein bL9m (262 aa).

The transit peptide at 1 to 49 directs the protein to the mitochondrion; sequence MAASMAPRCSSLLWAGAAWLRQRGIGELLQPRIERSTPGRDFSLSHYQS.

This sequence belongs to the bacterial ribosomal protein bL9 family. As to quaternary structure, component of the mitochondrial ribosome large subunit (39S) which comprises a 16S rRNA and about 50 distinct proteins.

The protein localises to the mitochondrion. This chain is Large ribosomal subunit protein bL9m (Mrpl9), found in Rattus norvegicus (Rat).